The chain runs to 854 residues: Envelope glycoprotein B (854 aa).

The first 22 residues, 1–22, serve as a signal peptide directing secretion; it reads MAHTGSTVCAFLIFAVLKNVFC. The Virion surface portion of the chain corresponds to 23–732; the sequence is QTPTSSSEVE…SGIINFIKNP (710 aa). Residue N51 is glycosylated (N-linked (GlcNAc...) asparagine; by host). 5 disulfides stabilise this stretch: C69–C527, C86–C483, C158–C223, C315–C362, and C552–C589. The segment at 125-131 is involved in fusion and/or binding to host membrane; it reads IYNGIYA. A glycan (N-linked (GlcNAc...) asparagine; by host) is linked at N180. Residues 209 to 217 form an involved in fusion and/or binding to host membrane region; that stretch reads GWLLGGYRR. N-linked (GlcNAc...) asparagine; by host glycans are attached at residues N258 and N311. 6 N-linked (GlcNAc...) asparagine; by host glycosylation sites follow: N364, N379, N385, N424, N564, and N630. Positions 422–443 are disordered; it reads QQNTTTTTTTTRSRRQRRSVSS. The hydrophobic membrane proximal region stretch occupies residues 679 to 730; sequence LTDLATNRNQFVDAFGSLMDDLGVVGKTVLNAVSSVATLFSSIVSGIINFIK. A helical membrane pass occupies residues 733–753; it reads FGGMLLFGLIAAVVITVILLN. Topologically, residues 754-854 are intravirion; that stretch reads RKAKRFAQNP…TDSFESTGVP (101 aa). The span at 802–813 shows a compositional bias: basic and acidic residues; the sequence is HASKQPESKQDE. Residues 802–829 form a disordered region; the sequence is HASKQPESKQDEEQGSTTSGPADWLNKA. An Internalization motif motif is present at residues 839–842; that stretch reads YKPL.

This sequence belongs to the herpesviridae glycoprotein B family. Homotrimer; disulfide-linked. Binds to heparan sulfate proteoglycans. Interacts with gH/gL heterodimer. Post-translationally, a proteolytic cleavage by host furin generates two subunits that remain linked by disulfide bonds.

It localises to the virion membrane. It is found in the host cell membrane. The protein localises to the host endosome membrane. Its subcellular location is the host Golgi apparatus membrane. Functionally, envelope glycoprotein that forms spikes at the surface of virion envelope. Essential for the initial attachment to heparan sulfate moieties of the host cell surface proteoglycans. Involved in fusion of viral and cellular membranes leading to virus entry into the host cell. Following initial binding to its host receptors, membrane fusion is mediated by the fusion machinery composed at least of gB and the heterodimer gH/gL. May be involved in the fusion between the virion envelope and the outer nuclear membrane during virion egress. The chain is Envelope glycoprotein B from Connochaetes taurinus (Blue wildebeest).